A 393-amino-acid polypeptide reads, in one-letter code: S-adenosylmethionine synthase 1 (393 aa).

E9 provides a ligand contact to Mg(2+). An ATP-binding site is contributed by H15. E43 contacts K(+). E56 and Q99 together coordinate L-methionine. Residues 167–169, 235–238, D246, 252–253, A269, K273, and K277 each bind ATP; these read DGK, SGRF, and RK. D246 is an L-methionine binding site. K277 contributes to the L-methionine binding site.

The protein belongs to the AdoMet synthase family. Homotetramer. The cofactor is Mn(2+). It depends on Mg(2+) as a cofactor. Co(2+) serves as cofactor. K(+) is required as a cofactor.

Its subcellular location is the cytoplasm. It carries out the reaction L-methionine + ATP + H2O = S-adenosyl-L-methionine + phosphate + diphosphate. Its pathway is amino-acid biosynthesis; S-adenosyl-L-methionine biosynthesis; S-adenosyl-L-methionine from L-methionine: step 1/1. Catalyzes the formation of S-adenosylmethionine from methionine and ATP. The reaction comprises two steps that are both catalyzed by the same enzyme: formation of S-adenosylmethionine (AdoMet) and triphosphate, and subsequent hydrolysis of the triphosphate. This Solanum tuberosum (Potato) protein is S-adenosylmethionine synthase 1 (METK1).